Consider the following 388-residue polypeptide: Alanine racemase (388 aa).

The active-site Proton acceptor; specific for D-alanine is the K44. N6-(pyridoxal phosphate)lysine is present on K44. A substrate-binding site is contributed by R142. Y273 (proton acceptor; specific for L-alanine) is an active-site residue. M321 contacts substrate.

Belongs to the alanine racemase family. It depends on pyridoxal 5'-phosphate as a cofactor.

It catalyses the reaction L-alanine = D-alanine. It functions in the pathway amino-acid biosynthesis; D-alanine biosynthesis; D-alanine from L-alanine: step 1/1. Functionally, catalyzes the interconversion of L-alanine and D-alanine. May also act on other amino acids. In Mycobacterium leprae (strain TN), this protein is Alanine racemase (alr).